The sequence spans 90 residues: Sec-independent protein translocase protein TatA (90 aa).

The chain crosses the membrane as a helical span at residues 1 to 21 (MGSMSIWHWVIVAVIVMLLFG). Positions 44 to 90 (AEDETPPAVQAAPPPAEPVRTIPHATETSPGTAIPASHLPGGERKPV) are disordered.

The protein belongs to the TatA/E family. As to quaternary structure, the Tat system comprises two distinct complexes: a TatABC complex, containing multiple copies of TatA, TatB and TatC subunits, and a separate TatA complex, containing only TatA subunits. Substrates initially bind to the TatABC complex, which probably triggers association of the separate TatA complex to form the active translocon.

The protein resides in the cell inner membrane. Functionally, part of the twin-arginine translocation (Tat) system that transports large folded proteins containing a characteristic twin-arginine motif in their signal peptide across membranes. TatA could form the protein-conducting channel of the Tat system. This Methylobacterium radiotolerans (strain ATCC 27329 / DSM 1819 / JCM 2831 / NBRC 15690 / NCIMB 10815 / 0-1) protein is Sec-independent protein translocase protein TatA.